The primary structure comprises 1941 residues: Integrin beta-like protein B (1941 aa).

A signal peptide spans Met-1–Ala-20. At Thr-21–Thr-1871 the chain is on the extracellular side. The 38-residue stretch at Tyr-420–Ser-457 folds into the EGF-like domain. Intrachain disulfides connect Cys-430-Cys-445 and Cys-447-Cys-456. Positions Asp-513–Leu-696 constitute a VWFA domain. Residues Asn-1400, Asn-1505, Asn-1530, Asn-1606, Asn-1652, Asn-1738, Asn-1777, Asn-1848, Asn-1866, and Asn-1869 are each glycosylated (N-linked (GlcNAc...) asparagine). A helical transmembrane segment spans residues Val-1872–Trp-1892. Residues Lys-1893 to Leu-1941 lie on the Cytoplasmic side of the membrane. The interval Met-1921–Leu-1941 is disordered.

This sequence belongs to the SIB family. Interacts with talA/talin.

Its subcellular location is the membrane. Functionally, implicated in cellular adhesion. The polypeptide is Integrin beta-like protein B (sibB) (Dictyostelium discoideum (Social amoeba)).